Here is a 681-residue protein sequence, read N- to C-terminus: Proline dehydrogenase 1, mitochondrial (681 aa).

Residues 1–30 (MALLRSLSAQRTAISLVYGRNSSKSSNSVA) constitute a mitochondrion transit peptide. Polar residues predominate over residues 76-87 (STLVQPEVVSSE). 2 disordered regions span residues 76 to 113 (STLVQPEVVSSETVKRSMKQESSQEKNPSPAGSPQRDP) and 216 to 239 (EEAEKREVESSVSSAGDKKEEGSM). A compositionally biased stretch (basic and acidic residues) spans 88–99 (TVKRSMKQESSQ).

Belongs to the proline oxidase family. It depends on FAD as a cofactor. As to expression, most abundant in developing nervous system.

It localises to the mitochondrion matrix. The catalysed reaction is L-proline + a quinone = (S)-1-pyrroline-5-carboxylate + a quinol + H(+). The protein operates within amino-acid degradation; L-proline degradation into L-glutamate; L-glutamate from L-proline: step 1/2. Its function is as follows. Converts proline to delta-1-pyrroline-5-carboxylate. Involved in the conversion of proline to glutamate, which functions as a transmitter at neuromuscular junctions. Glutamate deficiency could possibly account for reduced motor activity. This Drosophila melanogaster (Fruit fly) protein is Proline dehydrogenase 1, mitochondrial (slgA).